A 416-amino-acid chain; its full sequence is Glutamyl-tRNA reductase 1 (416 aa).

Substrate-binding positions include 57 to 60 (TCNR), Ser-113, 118 to 120 (DFE), and Gln-124. The Nucleophile role is filled by Cys-58. 193-198 (GTGKIG) provides a ligand contact to NADP(+).

The protein belongs to the glutamyl-tRNA reductase family. In terms of assembly, homodimer.

It carries out the reaction (S)-4-amino-5-oxopentanoate + tRNA(Glu) + NADP(+) = L-glutamyl-tRNA(Glu) + NADPH + H(+). It participates in porphyrin-containing compound metabolism; protoporphyrin-IX biosynthesis; 5-aminolevulinate from L-glutamyl-tRNA(Glu): step 1/2. Catalyzes the NADPH-dependent reduction of glutamyl-tRNA(Glu) to glutamate 1-semialdehyde (GSA). The sequence is that of Glutamyl-tRNA reductase 1 from Flavobacterium johnsoniae (strain ATCC 17061 / DSM 2064 / JCM 8514 / BCRC 14874 / CCUG 350202 / NBRC 14942 / NCIMB 11054 / UW101) (Cytophaga johnsonae).